Reading from the N-terminus, the 247-residue chain is Small ribosomal subunit protein uS2 (247 aa).

The protein belongs to the universal ribosomal protein uS2 family.

In Ectopseudomonas mendocina (strain ymp) (Pseudomonas mendocina), this protein is Small ribosomal subunit protein uS2.